We begin with the raw amino-acid sequence, 365 residues long: Histidinol-phosphate aminotransferase (365 aa).

Position 223 is an N6-(pyridoxal phosphate)lysine (lysine 223).

The protein belongs to the class-II pyridoxal-phosphate-dependent aminotransferase family. Histidinol-phosphate aminotransferase subfamily. As to quaternary structure, homodimer. Pyridoxal 5'-phosphate serves as cofactor.

It carries out the reaction L-histidinol phosphate + 2-oxoglutarate = 3-(imidazol-4-yl)-2-oxopropyl phosphate + L-glutamate. Its pathway is amino-acid biosynthesis; L-histidine biosynthesis; L-histidine from 5-phospho-alpha-D-ribose 1-diphosphate: step 7/9. In Bacillus pumilus (strain SAFR-032), this protein is Histidinol-phosphate aminotransferase.